Reading from the N-terminus, the 809-residue chain is Glutamine--tRNA ligase (809 aa).

A compositionally biased stretch (basic and acidic residues) spans 185-198 (DLIKKKTKNNEKKK). A disordered region spans residues 185–216 (DLIKKKTKNNEKKKTNSAKKSSDNSASSGPKR). Positions 258 to 268 (PEPNGYLHIGH) match the 'HIGH' region motif. Residues 259–261 (EPN) and 265–271 (HIGHSKA) each bind ATP. Aspartate 291 is a binding site for L-glutamine. Serine 378 bears the Phosphoserine mark. Tyrosine 440 is a binding site for L-glutamine. ATP is bound by residues threonine 459, 488 to 489 (RL), and 496 to 498 (LSK). A 'KMSKS' region motif is present at residues 495–499 (VLSKR).

This sequence belongs to the class-I aminoacyl-tRNA synthetase family.

The catalysed reaction is tRNA(Gln) + L-glutamine + ATP = L-glutaminyl-tRNA(Gln) + AMP + diphosphate. The chain is Glutamine--tRNA ligase (GLN4) from Saccharomyces cerevisiae (strain ATCC 204508 / S288c) (Baker's yeast).